A 169-amino-acid polypeptide reads, in one-letter code: Phosphopantetheine adenylyltransferase (169 aa).

Position 14 (threonine 14) interacts with substrate. ATP-binding positions include 14 to 15 (TF) and histidine 22. Substrate contacts are provided by lysine 46, leucine 78, and arginine 92. ATP contacts are provided by residues 93 to 95 (GLR), glutamate 103, and 128 to 134 (HSFISSS).

The protein belongs to the bacterial CoaD family. In terms of assembly, homohexamer. Mg(2+) serves as cofactor.

It localises to the cytoplasm. It catalyses the reaction (R)-4'-phosphopantetheine + ATP + H(+) = 3'-dephospho-CoA + diphosphate. It participates in cofactor biosynthesis; coenzyme A biosynthesis; CoA from (R)-pantothenate: step 4/5. Functionally, reversibly transfers an adenylyl group from ATP to 4'-phosphopantetheine, yielding dephospho-CoA (dPCoA) and pyrophosphate. The sequence is that of Phosphopantetheine adenylyltransferase from Stenotrophomonas maltophilia (strain R551-3).